Here is a 156-residue protein sequence, read N- to C-terminus: Transcription elongation factor GreA (156 aa).

A coiled-coil region spans residues 8-75; sequence LTKEGYEKLK…ELENMLSKAE (68 aa).

This sequence belongs to the GreA/GreB family.

Functionally, necessary for efficient RNA polymerase transcription elongation past template-encoded arresting sites. The arresting sites in DNA have the property of trapping a certain fraction of elongating RNA polymerases that pass through, resulting in locked ternary complexes. Cleavage of the nascent transcript by cleavage factors such as GreA or GreB allows the resumption of elongation from the new 3'terminus. GreA releases sequences of 2 to 3 nucleotides. The polypeptide is Transcription elongation factor GreA (Thermosipho melanesiensis (strain DSM 12029 / CIP 104789 / BI429)).